The following is a 207-amino-acid chain: dTTP/UTP pyrophosphatase (207 aa).

Residue Asp-79 is the Proton acceptor of the active site.

The protein belongs to the Maf family. YhdE subfamily. It depends on a divalent metal cation as a cofactor.

Its subcellular location is the cytoplasm. The enzyme catalyses dTTP + H2O = dTMP + diphosphate + H(+). It catalyses the reaction UTP + H2O = UMP + diphosphate + H(+). Functionally, nucleoside triphosphate pyrophosphatase that hydrolyzes dTTP and UTP. May have a dual role in cell division arrest and in preventing the incorporation of modified nucleotides into cellular nucleic acids. The sequence is that of dTTP/UTP pyrophosphatase from Rhodopseudomonas palustris (strain HaA2).